The primary structure comprises 481 residues: Alginate biosynthesis protein AlgA (481 aa).

It belongs to the mannose-6-phosphate isomerase type 2 family. In terms of assembly, monomer. Co(2+) serves as cofactor.

The catalysed reaction is D-mannose 6-phosphate = D-fructose 6-phosphate. It catalyses the reaction alpha-D-mannose 1-phosphate + GTP + H(+) = GDP-alpha-D-mannose + diphosphate. Its pathway is nucleotide-sugar biosynthesis; GDP-alpha-D-mannose biosynthesis; GDP-alpha-D-mannose from alpha-D-mannose 1-phosphate (GTP route): step 1/1. It participates in nucleotide-sugar biosynthesis; GDP-alpha-D-mannose biosynthesis; alpha-D-mannose 1-phosphate from D-fructose 6-phosphate: step 1/2. Its function is as follows. Produces a precursor for alginate polymerization. The alginate layer provides a protective barrier against host immune defenses and antibiotics. In Pseudomonas aeruginosa (strain ATCC 15692 / DSM 22644 / CIP 104116 / JCM 14847 / LMG 12228 / 1C / PRS 101 / PAO1), this protein is Alginate biosynthesis protein AlgA (algA).